The following is a 469-amino-acid chain: Bifunctional protein GlmU (469 aa).

Positions 1-237 (MTTNRKFAIA…SHEVLGVNTR (237 aa)) are pyrophosphorylase. UDP-N-acetyl-alpha-D-glucosamine-binding positions include 12-15 (LAAG), lysine 26, glutamine 78, 83-84 (GT), 105-107 (SGD), glycine 144, glutamate 162, asparagine 177, and asparagine 235. Aspartate 107 provides a ligand contact to Mg(2+). Position 235 (asparagine 235) interacts with Mg(2+). The segment at 238–258 (QDLASLDAHLRLQKCQQLMSA) is linker. Residues 259–469 (GVSIFKPETC…KKRAEQKKKK (211 aa)) form an N-acetyltransferase region. The UDP-N-acetyl-alpha-D-glucosamine site is built by arginine 341 and lysine 359. Catalysis depends on histidine 371, which acts as the Proton acceptor. Residues tyrosine 374 and asparagine 385 each coordinate UDP-N-acetyl-alpha-D-glucosamine. Residues alanine 388, 394–395 (NY), serine 413, alanine 431, and arginine 448 contribute to the acetyl-CoA site.

This sequence in the N-terminal section; belongs to the N-acetylglucosamine-1-phosphate uridyltransferase family. In the C-terminal section; belongs to the transferase hexapeptide repeat family. Homotrimer. Mg(2+) is required as a cofactor.

Its subcellular location is the cytoplasm. The enzyme catalyses alpha-D-glucosamine 1-phosphate + acetyl-CoA = N-acetyl-alpha-D-glucosamine 1-phosphate + CoA + H(+). It catalyses the reaction N-acetyl-alpha-D-glucosamine 1-phosphate + UTP + H(+) = UDP-N-acetyl-alpha-D-glucosamine + diphosphate. The protein operates within nucleotide-sugar biosynthesis; UDP-N-acetyl-alpha-D-glucosamine biosynthesis; N-acetyl-alpha-D-glucosamine 1-phosphate from alpha-D-glucosamine 6-phosphate (route II): step 2/2. Its pathway is nucleotide-sugar biosynthesis; UDP-N-acetyl-alpha-D-glucosamine biosynthesis; UDP-N-acetyl-alpha-D-glucosamine from N-acetyl-alpha-D-glucosamine 1-phosphate: step 1/1. It functions in the pathway bacterial outer membrane biogenesis; LPS lipid A biosynthesis. Catalyzes the last two sequential reactions in the de novo biosynthetic pathway for UDP-N-acetylglucosamine (UDP-GlcNAc). The C-terminal domain catalyzes the transfer of acetyl group from acetyl coenzyme A to glucosamine-1-phosphate (GlcN-1-P) to produce N-acetylglucosamine-1-phosphate (GlcNAc-1-P), which is converted into UDP-GlcNAc by the transfer of uridine 5-monophosphate (from uridine 5-triphosphate), a reaction catalyzed by the N-terminal domain. The polypeptide is Bifunctional protein GlmU (Koribacter versatilis (strain Ellin345)).